A 685-amino-acid polypeptide reads, in one-letter code: DNA-directed RNA polymerase subunit beta' (685 aa).

Zn(2+) contacts are provided by Cys-69, Cys-71, Cys-87, and Cys-90. Positions 489, 491, and 493 each coordinate Mg(2+).

Belongs to the RNA polymerase beta' chain family. RpoC1 subfamily. In plastids the minimal PEP RNA polymerase catalytic core is composed of four subunits: alpha, beta, beta', and beta''. When a (nuclear-encoded) sigma factor is associated with the core the holoenzyme is formed, which can initiate transcription. Mg(2+) serves as cofactor. Zn(2+) is required as a cofactor.

It localises to the plastid. The protein resides in the chloroplast. The catalysed reaction is RNA(n) + a ribonucleoside 5'-triphosphate = RNA(n+1) + diphosphate. In terms of biological role, DNA-dependent RNA polymerase catalyzes the transcription of DNA into RNA using the four ribonucleoside triphosphates as substrates. The chain is DNA-directed RNA polymerase subunit beta' from Gossypium hirsutum (Upland cotton).